Reading from the N-terminus, the 1364-residue chain is DNA-directed RNA polymerase subunit beta' (1364 aa).

The disordered stretch occupies residues 1 to 42; it reads MTSSSSKSNKSRKSSKAAKDTTPVHESASRPLSKTPPPFRNH. 4 residues coordinate Zn(2+): Cys250, Cys317, Cys324, and Cys327.

Belongs to the RNA polymerase beta' chain family. RpoC2 subfamily. In cyanobacteria the RNAP catalytic core is composed of 2 alpha, 1 beta, 1 beta', 1 gamma and 1 omega subunit. When a sigma factor is associated with the core the holoenzyme is formed, which can initiate transcription. Zn(2+) serves as cofactor.

The enzyme catalyses RNA(n) + a ribonucleoside 5'-triphosphate = RNA(n+1) + diphosphate. DNA-dependent RNA polymerase catalyzes the transcription of DNA into RNA using the four ribonucleoside triphosphates as substrates. This chain is DNA-directed RNA polymerase subunit beta', found in Parasynechococcus marenigrum (strain WH8102).